A 359-amino-acid polypeptide reads, in one-letter code: Nicotinate-nucleotide--dimethylbenzimidazole phosphoribosyltransferase (359 aa).

The active-site Proton acceptor is the glutamate 318.

It belongs to the CobT family. In terms of assembly, homodimer.

The enzyme catalyses 5,6-dimethylbenzimidazole + nicotinate beta-D-ribonucleotide = alpha-ribazole 5'-phosphate + nicotinate + H(+). The protein operates within nucleoside biosynthesis; alpha-ribazole biosynthesis; alpha-ribazole from 5,6-dimethylbenzimidazole: step 1/2. Catalyzes the synthesis of alpha-ribazole-5'-phosphate from nicotinate mononucleotide (NAMN) and 5,6-dimethylbenzimidazole (DMB). In Escherichia coli O81 (strain ED1a), this protein is Nicotinate-nucleotide--dimethylbenzimidazole phosphoribosyltransferase.